The chain runs to 204 residues: MSERGLLIVLSGPSGVGKGTVRKAIFDSEENDFQYSISMTTRKQREGEVDGVDYYFRSREEFEAMIEAGEMLEYAEYVGNYYGTPLTYVNQTLDEGKDVFLEIEVQGAKQVKDKVPDGVFIFLTPPDLAELKSRIIGRGTDEMSVIEERMAVAREEIEMMALYDYAVVNDEVPLAVQRIKDIIASEHFRVDRVIGKYIKMLEEM.

Residues 5–184 enclose the Guanylate kinase-like domain; the sequence is GLLIVLSGPS…AVQRIKDIIA (180 aa). ATP is bound at residue 12-19; that stretch reads GPSGVGKG.

This sequence belongs to the guanylate kinase family.

It localises to the cytoplasm. It catalyses the reaction GMP + ATP = GDP + ADP. Functionally, essential for recycling GMP and indirectly, cGMP. The chain is Guanylate kinase from Enterococcus faecalis (strain ATCC 700802 / V583).